The primary structure comprises 63 residues: Large ribosomal subunit protein bL28 (63 aa).

It belongs to the bacterial ribosomal protein bL28 family.

This Desulfitobacterium hafniense (strain DSM 10664 / DCB-2) protein is Large ribosomal subunit protein bL28.